A 203-amino-acid polypeptide reads, in one-letter code: ATP-dependent Clp protease proteolytic subunit (203 aa).

Residue Ser-98 is the Nucleophile of the active site. Residue His-123 is part of the active site.

It belongs to the peptidase S14 family. In terms of assembly, fourteen ClpP subunits assemble into 2 heptameric rings which stack back to back to give a disk-like structure with a central cavity, resembling the structure of eukaryotic proteasomes.

The protein resides in the cytoplasm. The enzyme catalyses Hydrolysis of proteins to small peptides in the presence of ATP and magnesium. alpha-casein is the usual test substrate. In the absence of ATP, only oligopeptides shorter than five residues are hydrolyzed (such as succinyl-Leu-Tyr-|-NHMec, and Leu-Tyr-Leu-|-Tyr-Trp, in which cleavage of the -Tyr-|-Leu- and -Tyr-|-Trp bonds also occurs).. In terms of biological role, cleaves peptides in various proteins in a process that requires ATP hydrolysis. Has a chymotrypsin-like activity. Plays a major role in the degradation of misfolded proteins. This Desulfotalea psychrophila (strain LSv54 / DSM 12343) protein is ATP-dependent Clp protease proteolytic subunit.